The following is a 333-amino-acid chain: Adenosine deaminase (333 aa).

The Zn(2+) site is built by His-12 and His-14. Residues His-14, Asp-16, and Gly-170 each contribute to the substrate site. Residue His-197 participates in Zn(2+) binding. The active-site Proton donor is Glu-200. Asp-278 is a binding site for Zn(2+). Position 279 (Asp-279) interacts with substrate.

Belongs to the metallo-dependent hydrolases superfamily. Adenosine and AMP deaminases family. Adenosine deaminase subfamily. The cofactor is Zn(2+).

The enzyme catalyses adenosine + H2O + H(+) = inosine + NH4(+). It catalyses the reaction 2'-deoxyadenosine + H2O + H(+) = 2'-deoxyinosine + NH4(+). Its function is as follows. Catalyzes the hydrolytic deamination of adenosine and 2-deoxyadenosine. This chain is Adenosine deaminase, found in Escherichia coli O7:K1 (strain IAI39 / ExPEC).